Consider the following 814-residue polypeptide: MAIPGSLGECGYIRTVLGQQILGHLDSSSLALPSEARLRLAGSSGRGDPVARSQRIQEQVQQTLARRGRSSVVGGNLHRTSSVPEYVYKLHLVENDFVGRQSPAARDYDMLKVGLSGWRDGSTLKVPCTSIKPHREKKTWIEALREGLEHTTDHTDCPAHYVYSHYYFNSKKSNILVFQHIKDKSLQRNAIILLSPEHCTCQHVRLIPSSVLPSLFNQLQLSPELYFSNMGTLYMTSIKGTLCIQLLKGKLPAKHQANFVTMAERRVYTLLLSSTTSSETSFRRTGDTLPSVTSGQSRVHGLHFHHVICDCLSRNADLEMTLERAVNMLDADHVPLSKISAAATFIQHESFQKSEARKRVNQLQGIPKLLQLLKVQNEDVQRAVCGALRNLVFEDNDNKVTVVLGKVNITKREGGGQAAGYMKETWKLANKNPVFLGLLWNLSSSDKLKHLMITEALLTLTESVIIPFSGWPEGDYPKANGLLDFDIFYNVTGCLRNMSSAGPDGRKVMRRCDGLIDSLVHYVRGTIADYQPDDKATENCVCILHNLSYQLEAELPEKYSQSIYMQNRNIQTNSNKSIGCFGSRSRKVKEQYQDTPMPEERSSPRGIEWLWHSIVIRMYLSLIAKSSRNYTQEASLGALQNLTAGSGPIPTSVARMVVQKENGLQHTRKMLHVGDPSVKKTAVSLLRNLSRNLSLQNEIAKETLPDLVSIIPDTVPSTDLLIETTASACYTLNNLMQNSYQNARDLLNTGGLQKIMTISIGEGYAPNKASKAASVLLYSLWAHTELHNAYKKAQFKKTDFVNSRTAKASHSLKD.

Residues M1–L329 form a required for binding to single-stranded DNA region. S44 carries the phosphoserine modification. Residue R46 is modified to Omega-N-methylarginine. Phosphoserine occurs at positions 82 and 130. ARM repeat units lie at residues T200 to G240, C309 to Q352, S354 to F393, P503 to Y549, P604 to A644, S652 to R691, Q696 to Q737, and Y740 to A782.

This sequence belongs to the beta-catenin family. As to quaternary structure, interacts with DSC2. Interacts with JUP. Interacts with KRT5/CK5, KRT8/CK8, KRT14/CK14, KRT18/CK18 and VIM. Interacts (via N-terminus) with MARK3/C-TAK1. Interacts with DSP. Interacts with DSG1, DSG2 and DSG3. Interacts (via N-terminus) with CTNNB1. Interacts with CDH1. Interacts with the RNA polymerase III (Pol III) complex proteins POLR3A/RPC155, POLR3F/RPC39 and POLR3C/RPC82. Interacts with CTNNA3. Interacts (via N-terminus) with SCN5A/Nav1.5. Interacts with ANK3/ANKG and GJA1/CX43. As to expression, expressed in the heart (at protein level).

Its subcellular location is the nucleus. The protein localises to the cell junction. It is found in the desmosome. It localises to the cytoplasm. Functionally, a component of desmosome cell-cell junctions which are required for positive regulation of cellular adhesion. Regulates focal adhesion turnover resulting in changes in focal adhesion size, cell adhesion and cell spreading, potentially via transcriptional modulation of beta-integrins. Required to maintain gingival epithelial barrier function. Important component of the desmosome that is also required for localization of desmosome component proteins such as DSC2, DSG2 and JUP to the desmosome cell-cell junction. Required for the formation of desmosome cell junctions in cardiomyocytes, thereby required for the correct formation of the heart, specifically trabeculation and formation of the atria walls. Loss of desmosome cell junctions leads to mis-localization of DSP and DSG2 resulting in disruption of cell-cell adhesion and disordered intermediate filaments. Modulates profibrotic gene expression in cardiomyocytes via regulation of DSP expression and subsequent activation of downstream TGFB1 and MAPK14/p38 MAPK signaling. Required for cardiac sodium current propagation and electrical synchrony in cardiac myocytes, via ANK3 stabilization and modulation of SCN5A/Nav1.5 localization to cell-cell junctions. Required for mitochondrial function, nuclear envelope integrity and positive regulation of SIRT3 transcription via maintaining DES localization at its nuclear envelope and cell tip anchoring points, and thereby preserving regulation of the transcriptional program. Maintenance of nuclear envelope integrity protects against DNA damage and transcriptional dysregulation of genes, especially those involved in the electron transport chain, thereby preserving mitochondrial function and protecting against superoxide radical anion generation. Binds single-stranded DNA (ssDNA). May regulate the localization of GJA1 to gap junctions in intercalated disks of the heart. This is Plakophilin-2 from Rattus norvegicus (Rat).